The primary structure comprises 28 residues: M-poneritoxin-Dq4a (28 aa).

Alanine 28 carries the alanine amide modification.

In terms of tissue distribution, expressed by the venom gland.

It localises to the secreted. In terms of biological role, the synthetic peptide has weak antimicrobial activity against Gram-negative bacterium E.coli ATCC 10536. It does not show antimicrobial activity against the Gram-positive bacteria B.amyloliquefacies S499, L.monocytogenes 2231 and S.aureus ATCC 29213, against the Gram-negative bacteria P.putida BTP1 and P.aeruginosa PaO1, or against the fungi S.cerevisiae, R.mucilaginosa, C.cucumerinum, F.oxysporum and B.cinerea. This is M-poneritoxin-Dq4a from Dinoponera quadriceps (South American ant).